A 210-amino-acid polypeptide reads, in one-letter code: Large ribosomal subunit protein bL9 (210 aa).

The tract at residues 172-210 (EAAAAALEPDSEEEFEAATPPSELAAEASDEDADDAKEA) is disordered. The segment covering 199-210 (ASDEDADDAKEA) has biased composition (acidic residues).

Belongs to the bacterial ribosomal protein bL9 family.

Its function is as follows. Binds to the 23S rRNA. This chain is Large ribosomal subunit protein bL9, found in Sphingopyxis alaskensis (strain DSM 13593 / LMG 18877 / RB2256) (Sphingomonas alaskensis).